A 455-amino-acid polypeptide reads, in one-letter code: 3-phosphoshikimate 1-carboxyvinyltransferase (455 aa).

Residues 1–19 (MSHGASSRPATARKSSGLS) are compositionally biased toward polar residues. Residues 1–25 (MSHGASSRPATARKSSGLSGTVRIP) form a disordered region. Position 28 (Lys28) interacts with phosphoenolpyruvate. The 3-phosphoshikimate site is built by Ser29 and Arg33. Arg128 contributes to the phosphoenolpyruvate binding site. 3-phosphoshikimate-binding residues include Ser173, Ala174, Gln175, Asp326, and Lys353. Residue Gln175 coordinates phosphoenolpyruvate. Asp326 serves as the catalytic Proton acceptor. Phosphoenolpyruvate contacts are provided by Arg357 and Arg405.

It belongs to the EPSP synthase family. In terms of assembly, monomer.

It localises to the cytoplasm. It carries out the reaction 3-phosphoshikimate + phosphoenolpyruvate = 5-O-(1-carboxyvinyl)-3-phosphoshikimate + phosphate. It participates in metabolic intermediate biosynthesis; chorismate biosynthesis; chorismate from D-erythrose 4-phosphate and phosphoenolpyruvate: step 6/7. Is resistant to inhibition by glyphosate (glyphosate-tolerant) like other members of class II EPSPS, in contrast to class I EPSPS, which is glyphosate-sensitive. Is much less sensitive to inhibition by the (R)-difluoromethyl and (R)-phosphonate analogs of the tetrahedral reaction intermediate than the representative class I EPSPS from E.coli. Is highly activated in the presence of cations, such as NH4(+), Rb(+), and K(+). Functionally, catalyzes the transfer of the enolpyruvyl moiety of phosphoenolpyruvate (PEP) to the 5-hydroxyl of shikimate-3-phosphate (S3P) to produce enolpyruvyl shikimate-3-phosphate and inorganic phosphate. This is 3-phosphoshikimate 1-carboxyvinyltransferase from Agrobacterium sp. (strain CP4).